The sequence spans 347 residues: DNA-directed RNA polymerase subunit alpha (347 aa).

The alpha N-terminal domain (alpha-NTD) stretch occupies residues 1 to 226; it reads MLISQRPTLS…ELFGLARELN (226 aa). The alpha C-terminal domain (alpha-CTD) stretch occupies residues 243–347; sequence HIASFALPID…EQDYAETEQL (105 aa).

This sequence belongs to the RNA polymerase alpha chain family. In terms of assembly, homodimer. The RNAP catalytic core consists of 2 alpha, 1 beta, 1 beta' and 1 omega subunit. When a sigma factor is associated with the core the holoenzyme is formed, which can initiate transcription.

The catalysed reaction is RNA(n) + a ribonucleoside 5'-triphosphate = RNA(n+1) + diphosphate. Functionally, DNA-dependent RNA polymerase catalyzes the transcription of DNA into RNA using the four ribonucleoside triphosphates as substrates. The polypeptide is DNA-directed RNA polymerase subunit alpha (Mycobacterium bovis (strain ATCC BAA-935 / AF2122/97)).